The primary structure comprises 238 residues: Cysteine-rich venom protein (238 aa).

The N-terminal stretch at 1 to 19 is a signal peptide; that stretch reads MIAFIVLLSLAAVLQQSSG. The SCP domain occupies 38–164; the sequence is VDKHNALRRS…STKYLYVCQY (127 aa). Disulfide bonds link Cys75-Cys153, Cys92-Cys165, Cys148-Cys162, Cys184-Cys191, Cys187-Cys196, Cys200-Cys233, Cys209-Cys227, and Cys218-Cys231. The 34-residue stretch at 200–233 folds into the ShKT domain; that stretch reads CKYEDAFTNCNELAKETKCKTEWIKSKCPATCFC.

It belongs to the CRISP family. Expressed by the venom gland.

Its subcellular location is the secreted. Functionally, blocks olfactory (CNGA2) and retinal (CNGA1) CNG channel currents. Does not affect neither depolarization- nor caffeine-induced contraction of smooth muscle. The polypeptide is Cysteine-rich venom protein (Drysdalia coronoides (White-lipped snake)).